The sequence spans 269 residues: 4-hydroxy-tetrahydrodipicolinate reductase (269 aa).

11-16 contacts NAD(+); it reads GPIGRM. An NADP(+)-binding site is contributed by Lys-39. NAD(+)-binding positions include 101 to 103 and 125 to 128; these read GTT and ASNF. The active-site Proton donor/acceptor is His-158. His-159 contributes to the (S)-2,3,4,5-tetrahydrodipicolinate binding site. The active-site Proton donor is the Lys-162. 168 to 169 serves as a coordination point for (S)-2,3,4,5-tetrahydrodipicolinate; that stretch reads GT.

Belongs to the DapB family. Homotetramer.

The protein localises to the cytoplasm. The catalysed reaction is (S)-2,3,4,5-tetrahydrodipicolinate + NAD(+) + H2O = (2S,4S)-4-hydroxy-2,3,4,5-tetrahydrodipicolinate + NADH + H(+). It catalyses the reaction (S)-2,3,4,5-tetrahydrodipicolinate + NADP(+) + H2O = (2S,4S)-4-hydroxy-2,3,4,5-tetrahydrodipicolinate + NADPH + H(+). Its pathway is amino-acid biosynthesis; L-lysine biosynthesis via DAP pathway; (S)-tetrahydrodipicolinate from L-aspartate: step 4/4. Functionally, catalyzes the conversion of 4-hydroxy-tetrahydrodipicolinate (HTPA) to tetrahydrodipicolinate. The protein is 4-hydroxy-tetrahydrodipicolinate reductase of Buchnera aphidicola subsp. Acyrthosiphon pisum (strain APS) (Acyrthosiphon pisum symbiotic bacterium).